The primary structure comprises 392 residues: Putative RNA-binding protein Luc7-like 2 (392 aa).

S18 carries the post-translational modification Phosphoserine. Residues 102 to 177 adopt a coiled-coil conformation; sequence EVSKKRLAET…EAEEVYRNSM (76 aa). The span at 235–257 shows a compositional bias: basic and acidic residues; that stretch reads KQEKRNQERLKRREEREREEREK. A disordered region spans residues 235–392; sequence KQEKRNQERL…SSEEREAGEI (158 aa). Basic residues predominate over residues 258–321; the sequence is LRRSRSHSKN…RSRSHQRSRH (64 aa). 5-hydroxylysine; by JMJD6 is present on residues K266 and K269. 2 stretches are compositionally biased toward basic and acidic residues: residues 337–364 and 377–392; these read KERFRDQDLASRDRDRSSRDRSPRDRDR and RSEDRRSSEEREAGEI.

It belongs to the Luc7 family. As to quaternary structure, interacts with SCNM1. All isoforms are expressed in brain, kidney, heart, thymus, stomach, skeletal muscle, testis and spinal cord.

It is found in the nucleus speckle. It localises to the nucleus. Its subcellular location is the nucleoplasm. May bind to RNA via its Arg/Ser-rich domain. This is Putative RNA-binding protein Luc7-like 2 (Luc7l2) from Mus musculus (Mouse).